We begin with the raw amino-acid sequence, 251 residues long: E3 ubiquitin-protein ligase MARCHF3 (251 aa).

The RING-CH-type zinc finger occupies 61-121 (QSFNDRPMCR…ELCHFRFSVE (61 aa)). Zn(2+)-binding residues include Cys69, Cys72, Cys85, Cys87, His95, Cys98, Cys111, and Cys114. The next 2 helical transmembrane spans lie at 143-163 (LFGD…SGWL) and 180-200 (AVGL…WTLV).

It is found in the cytoplasmic vesicle membrane. It localises to the early endosome membrane. It carries out the reaction S-ubiquitinyl-[E2 ubiquitin-conjugating enzyme]-L-cysteine + [acceptor protein]-L-lysine = [E2 ubiquitin-conjugating enzyme]-L-cysteine + N(6)-ubiquitinyl-[acceptor protein]-L-lysine.. It functions in the pathway protein modification; protein ubiquitination. Functionally, E3 ubiquitin-protein ligase which may be involved in endosomal trafficking. E3 ubiquitin ligases accept ubiquitin from an E2 ubiquitin-conjugating enzyme in the form of a thioester and then directly transfer the ubiquitin to targeted substrates. This is E3 ubiquitin-protein ligase MARCHF3 (marchf3) from Xenopus tropicalis (Western clawed frog).